Reading from the N-terminus, the 129-residue chain is ALK and LTK ligand 1 (129 aa).

The N-terminal stretch at 1–27 is a signal peptide; sequence MRPLKPGAPLPALFLLALALSPHGAHG. Positions 24–63 are disordered; that stretch reads GAHGRPRGRRGARVTDKEPKPLLFLPAAGAGRTPSGSRSA. Residues 25–35 show a composition bias toward basic residues; that stretch reads AHGRPRGRRGA. Cystine bridges form between Cys-90–Cys-126 and Cys-104–Cys-113.

This sequence belongs to the ALKAL family. In terms of tissue distribution, widely expressed with highest levels in thyroid and moderate levels in stomach, trachea, small intestine, prostate and brain.

The protein resides in the secreted. It localises to the cell membrane. Its function is as follows. Cytokine that acts as a physiological ligand for receptor tyrosine kinase LTK, leading to its activation. Monomeric ALKAL1 binds to LTK, leading to LTK homodimerization and activation. In contrast to ALKAL2, does not act as a potent physiological ligand for ALK. The sequence is that of ALK and LTK ligand 1 from Homo sapiens (Human).